We begin with the raw amino-acid sequence, 173 residues long: MTLLSGKTTLVLCLSSILCGCTTNGLPTPYSINLSFPVITQNQINSGGYYINDAEQIRTTDGLCLDAGPDQQNRLTLRECKHVQSQLFSFHRDRITQGEKCLDAAGQGTKEGTPIILYSCTGNDNQRWLTDDNKIKGKQSRKCLGTNSIIVRKGDPVVLADCDFSRALEFTIR.

The N-terminal stretch at 1 to 20 is a signal peptide; sequence MTLLSGKTTLVLCLSSILCG. Residue cysteine 21 is the site of N-palmitoyl cysteine attachment. Residue cysteine 21 is the site of S-diacylglycerol cysteine attachment.

Its subcellular location is the cell membrane. The chain is Probable lipoprotein EnvE (envE) from Salmonella typhimurium (strain LT2 / SGSC1412 / ATCC 700720).